A 214-amino-acid chain; its full sequence is Large ribosomal subunit protein uL29m (214 aa).

This sequence belongs to the universal ribosomal protein uL29 family. Component of the mitochondrial large ribosomal subunit. Mature mitochondrial ribosomes consist of a small (37S) and a large (54S) subunit. The 37S subunit contains at least 33 different proteins and 1 molecule of RNA (15S). The 54S subunit contains at least 45 different proteins and 1 molecule of RNA (21S).

It is found in the mitochondrion. This chain is Large ribosomal subunit protein uL29m (mrpl4), found in Aspergillus terreus (strain NIH 2624 / FGSC A1156).